We begin with the raw amino-acid sequence, 164 residues long: Phosphopantetheine adenylyltransferase (164 aa).

Ser-9 serves as a coordination point for substrate. ATP contacts are provided by residues 9–10 (SF) and His-17. Residues Lys-41, Leu-73, and Arg-87 each contribute to the substrate site. ATP contacts are provided by residues Glu-98 and 122–128 (YSFLSSS).

The protein belongs to the bacterial CoaD family. As to quaternary structure, homohexamer. Requires Mg(2+) as cofactor.

The protein resides in the cytoplasm. It catalyses the reaction (R)-4'-phosphopantetheine + ATP + H(+) = 3'-dephospho-CoA + diphosphate. The protein operates within cofactor biosynthesis; coenzyme A biosynthesis; CoA from (R)-pantothenate: step 4/5. Reversibly transfers an adenylyl group from ATP to 4'-phosphopantetheine, yielding dephospho-CoA (dPCoA) and pyrophosphate. The sequence is that of Phosphopantetheine adenylyltransferase from Thermobifida fusca (strain YX).